Reading from the N-terminus, the 210-residue chain is Guanylate kinase (210 aa).

A Guanylate kinase-like domain is found at 6–184; it reads GTLYIISAPS…ALQDLKCIIQ (179 aa). 13–20 serves as a coordination point for ATP; the sequence is APSGAGKT.

This sequence belongs to the guanylate kinase family.

Its subcellular location is the cytoplasm. It carries out the reaction GMP + ATP = GDP + ADP. Essential for recycling GMP and indirectly, cGMP. The protein is Guanylate kinase of Nitrosospira multiformis (strain ATCC 25196 / NCIMB 11849 / C 71).